The following is a 103-amino-acid chain: Secreted Ly-6/uPAR-related protein 1 (103 aa).

The first 22 residues, 1–22 (MASRWAVQLLLVAAWSMGCGEA), serve as a signal peptide directing secretion. Residues 24 to 73 (KCYTCKEPMTSASCRTITRCKPEDTACMTTLVTVEAEYPFNQSPVVTRSC) form the UPAR/Ly6 domain. Intrachain disulfides connect cysteine 25–cysteine 50, cysteine 28–cysteine 37, cysteine 43–cysteine 73, cysteine 77–cysteine 93, and cysteine 94–cysteine 99.

Homodimer. Interacts with PLAU. Interacts with CHRNA7. In terms of tissue distribution, granulocytes. Expressed in skin. Predominantly expressed in the granular layer of skin, notably the acrosyringium. Identified in several biological fluids such as sweat, saliva, tears, plasma and urine.

It localises to the secreted. Has an antitumor activity. Was found to be a marker of late differentiation of the skin. Implicated in maintaining the physiological and structural integrity of the keratinocyte layers of the skin. In vitro down-regulates keratinocyte proliferation; the function may involve the proposed role as modulator of nicotinic acetylcholine receptors (nAChRs) activity. In vitro inhibits alpha-7-dependent nAChR currents in an allosteric manner. In T cells may be involved in regulation of intracellular Ca(2+) signaling. Seems to have an immunomodulatory function in the cornea. The function may implicate a possible role as a scavenger receptor for PLAU thereby blocking PLAU-dependent functions of PLAUR such as in cell migration and proliferation. The sequence is that of Secreted Ly-6/uPAR-related protein 1 (SLURP1) from Homo sapiens (Human).